The following is a 959-amino-acid chain: MEELVLPVISRQFDKKLLGRYEYVIELAKPEQDEWTNHDVTQIPGRRMFDVAQQGIRDAMHLKPLENDGEVLPRILDMSIACYDMRKTMMKKEGVDFVSNTRWLEWIIQDSMDVQPLRVHINEDHSTVQYDMFSAKVHIDSRKADTTSYHAIAVETKAERKCCHVRTEVWNSVVRNHLFNTAQESCYTFKQTYELIVNSERLSTEEEFRVGAPQFHTIQRNHRMQLGDNAYDKFLKGLVQLRVSGTTPAKIRDEVAALDVIRDNWIRGSFDRSHIKSLELCRLLSSIGRKMVNMEEEPKDEKDLSVKFQFRLDEKFSPNDPERNVIFTSKTHRTNEDRFYVLLVIAASDTNNGRVWWSNPYPCLRGALIAAECKLGDVYHTLRSKYAWGVRPTYKPKDLEREREKYVVGRVNLFDLEGEPATKVIHWEYELISPTYSVSNHKGNQCDLYPDDVEITTKFNEDRYREMIQSVIDDGWDQKNLKMYKILEEEGNPLLYDLEKDINLDSQSQVVFPSYYNKWTHAPMFNARVKPCDIELAERKNDDPFVKRTLKPIKADCVDLLRYHMSHYYDLRPCVKGVSLSIKQTPSGIHQALVQDDSYSRLLRRRDVDLDYSSPCPIITNYFLLEKFHILILTIMEKHYWELDDSDDVYEFPKIDASAFEVDGTLYDISQTIVHMYDRFFEKRRVLRSIDESRWILHLIRISQGRERLEVIERFFPNYGKAMRQRDFKKVRDVMFLNFLPFFFLTGDNISYEHRQWSIPIILYADKLRILPIEVGAHYNRFGVTCILELLNFFPSYEKREEKLEEDIVLCADAIVNFYLQTTISNGGVQTSIVSTKALLYEMYLSSICGGYSEGVLWYLPITHPVKCLVALEVSDALVGADVRIDKIKRRFPLSAKHLKGIVQISVHPNRTFSVTTCGIVKHKVCKKTLLKHRCDVILLQTPGYVFGNDELLTKLLNI.

Belongs to the orbivirus VP2 family.

The protein resides in the virion. Functionally, the VP2 protein is one of the two proteins (with VP5) which constitute the virus particle outer capsid. It is the major target of the host immunogenic response. Responsible for viral attachment to target host cell, probably by binding to sialic acid. This attachment induces virion internalization predominantly through clathrin-dependent endocytosis. The sequence is that of Outer capsid protein VP2 (Segment-2) from Antilocapra americana (Pronghorn).